A 212-amino-acid chain; its full sequence is Adenylate kinase (212 aa).

Residue 10–15 coordinates ATP; it reads GAGKGT. Residues 30 to 59 are NMP; sequence STGDMFRAAMANQTEMGVLAKSYIDKGELV. Residues Thr-31, Arg-36, 57–59, 86–89, and Gln-93 each bind AMP; these read ELV and GYPR. Residues 127 to 159 are LID; that stretch reads GRIIHRVTGETFHKVFNPPVDYKEEDYYQREDD. ATP contacts are provided by residues Arg-128 and 137 to 138; that span reads TF. Arg-156 and Arg-167 together coordinate AMP. Residue Gln-195 participates in ATP binding.

It belongs to the adenylate kinase family. Monomer.

The protein localises to the cytoplasm. The enzyme catalyses AMP + ATP = 2 ADP. The protein operates within purine metabolism; AMP biosynthesis via salvage pathway; AMP from ADP: step 1/1. Its function is as follows. Catalyzes the reversible transfer of the terminal phosphate group between ATP and AMP. Plays an important role in cellular energy homeostasis and in adenine nucleotide metabolism. The protein is Adenylate kinase of Streptococcus pneumoniae (strain JJA).